The primary structure comprises 553 residues: Flotillin family inner membrane protein YqiK (553 aa).

Residues 1–9 (MDDIVNSVP) lie on the Periplasmic side of the membrane. Residues 10-30 (SWMFTAIIAVCILFIIGIIFA) traverse the membrane as a helical segment. The Cytoplasmic segment spans residues 31-553 (RLYRRASAEQ…STTPVEEKAE (523 aa)).

It belongs to the band 7/mec-2 family. Flotillin subfamily. As to quaternary structure, homooligomerizes.

It localises to the cell inner membrane. The protein resides in the membrane raft. Its function is as follows. Found in membrane microdomains that may be equivalent to eukaryotic membrane rafts. FMMs are highly dynamic and increase in number as cells age. Flotillins are thought to be important factors in membrane fluidity. The protein is Flotillin family inner membrane protein YqiK (yqiK) of Escherichia coli (strain K12).